The sequence spans 117 residues: MTKNIHDVAYELQKTIAENEDFQTLKASYAAVQGDAESKNLFEEFRAMQLGLQQKMMQGQEITEEDNQKAQEVVARIQQDAKITKLMETEQRLNIVITDVNKIIMKPLEELYSAQQA.

Belongs to the UPF0342 family.

This is UPF0342 protein BcerKBAB4_0767 from Bacillus mycoides (strain KBAB4) (Bacillus weihenstephanensis).